Reading from the N-terminus, the 157-residue chain is uncharacterized protein (157 aa).

An N-terminal signal peptide occupies residues 1 to 28 (MKRLFMKASLVLFAVVFVFAVKGAPAKA).

This is an uncharacterized protein from Bacillus subtilis (strain 168).